The following is an 892-amino-acid chain: Translation initiation factor IF-2 (892 aa).

The interval 51 to 296 (REHGSAPNKL…KGKRKPSTLQ (246 aa)) is disordered. Residues 68 to 82 (STLNIPSTGGKSKSV) are compositionally biased toward polar residues. A compositionally biased stretch (basic and acidic residues) spans 99 to 217 (EQAKAEEQAQ…KMAAENEGKW (119 aa)). Residues 224–237 (QTESADYHVTTSQH) show a composition bias toward polar residues. Residues 239–254 (RAAEDENDAKVEGDRR) are compositionally biased toward basic and acidic residues. Basic residues predominate over residues 255 to 269 (SRTRGGKATKQKKGN). Residues 270–283 (KLSESKADREEARA) show a composition bias toward basic and acidic residues. Residues 391–560 (HRAPVVTIMG…LLQAEVMELK (170 aa)) form the tr-type G domain. The G1 stretch occupies residues 400–407 (GHVDHGKT). 400 to 407 (GHVDHGKT) is a binding site for GTP. The interval 425 to 429 (GITQH) is G2. Residues 446–449 (DTPG) are G3. Residues 446–450 (DTPGH) and 500–503 (NKID) contribute to the GTP site. Residues 500–503 (NKID) are G4. Positions 536–538 (SAK) are G5.

The protein belongs to the TRAFAC class translation factor GTPase superfamily. Classic translation factor GTPase family. IF-2 subfamily.

It is found in the cytoplasm. Its function is as follows. One of the essential components for the initiation of protein synthesis. Protects formylmethionyl-tRNA from spontaneous hydrolysis and promotes its binding to the 30S ribosomal subunits. Also involved in the hydrolysis of GTP during the formation of the 70S ribosomal complex. The polypeptide is Translation initiation factor IF-2 (Yersinia enterocolitica serotype O:8 / biotype 1B (strain NCTC 13174 / 8081)).